A 504-amino-acid chain; its full sequence is DnaJ homolog subfamily C member 3 (504 aa).

An N-terminal signal peptide occupies residues Met1–Cys31. 9 TPR repeats span residues Val37–Asn70, Ile72–Phe104, Thr105–Glu138, Met154–Asp187, Ala188–Asn221, Thr222–His255, Leu268–Val301, Val306–Asn339, and Val340–Asp373. Residues Cys248 and Cys258 are joined by a disulfide bond. Ser274 is subject to Phosphoserine. The cysteines at positions 313 and 329 are disulfide-linked. Positions Gln375–Arg393 are flexible linker. Positions Asp394 to Glu462 constitute a J domain. Positions Asp451 to Ser481 are disordered.

As to quaternary structure, interacts with EIF2AK4/GCN2; this interaction occurs under endoplasmic reticulum (ER) stress, hypothermic and amino acid starving stress conditions and inhibits EIF2AK4/GCN2 kinase activity. Interacts with EIF2AK3. Interacts with EIF2AK2. Forms a trimeric complex with DNAJB1 and HSPA8. Interacts with THAP12. Widely expressed, with high level in the liver.

Its subcellular location is the endoplasmic reticulum. Functionally, involved in the unfolded protein response (UPR) during endoplasmic reticulum (ER) stress. Acts as a negative regulator of the EIF2AK4/GCN2 kinase activity by preventing the phosphorylation of eIF-2-alpha at 'Ser-52' and hence attenuating general protein synthesis under ER stress, hypothermic and amino acid starving stress conditions. Co-chaperone of HSPA8/HSC70, it stimulates its ATPase activity. May inhibit both the autophosphorylation of EIF2AK2/PKR and the ability of EIF2AK2 to catalyze phosphorylation of the EIF2A. May inhibit EIF2AK3/PERK activity. The chain is DnaJ homolog subfamily C member 3 (Dnajc3) from Mus musculus (Mouse).